The sequence spans 863 residues: Oleate activated transcription factor 3 (863 aa).

A DNA-binding region (zn(2)-C6 fungal-type) is located at residues 19–47 (CTNCKKRKSKCDRTKPCGTCVRLGDVDSC). Residues 52-63 (DSSGQPESSPSL) show a composition bias toward polar residues. The disordered stretch occupies residues 52–81 (DSSGQPESSPSLNDADPLRKQSTPAERISP).

Belongs to the OAF3 family.

It localises to the cytoplasm. The protein resides in the nucleus. Its subcellular location is the mitochondrion. Its function is as follows. Transcriptional inhibitor with a significantly increased number of target genes in response to oleate. The polypeptide is Oleate activated transcription factor 3 (OAF3) (Saccharomyces cerevisiae (strain RM11-1a) (Baker's yeast)).